The chain runs to 217 residues: 3,4-dihydroxy-2-butanone 4-phosphate synthase (217 aa).

Residues 37 to 38 (RE), D42, 150 to 154 (RGGHT), and E174 contribute to the D-ribulose 5-phosphate site. E38 contacts Mg(2+). H153 contacts Mg(2+).

It belongs to the DHBP synthase family. As to quaternary structure, homodimer. Mg(2+) serves as cofactor. Requires Mn(2+) as cofactor.

It catalyses the reaction D-ribulose 5-phosphate = (2S)-2-hydroxy-3-oxobutyl phosphate + formate + H(+). Its pathway is cofactor biosynthesis; riboflavin biosynthesis; 2-hydroxy-3-oxobutyl phosphate from D-ribulose 5-phosphate: step 1/1. In terms of biological role, catalyzes the conversion of D-ribulose 5-phosphate to formate and 3,4-dihydroxy-2-butanone 4-phosphate. This is 3,4-dihydroxy-2-butanone 4-phosphate synthase from Klebsiella pneumoniae (strain 342).